The chain runs to 467 residues: Probable citrate synthase 2, mitochondrial (467 aa).

Catalysis depends on residues His-303, His-349, and Asp-404.

This sequence belongs to the citrate synthase family. As to quaternary structure, homodimer.

Its subcellular location is the mitochondrion matrix. The catalysed reaction is oxaloacetate + acetyl-CoA + H2O = citrate + CoA + H(+). It functions in the pathway carbohydrate metabolism; tricarboxylic acid cycle; isocitrate from oxaloacetate: step 1/2. The polypeptide is Probable citrate synthase 2, mitochondrial (Aedes aegypti (Yellowfever mosquito)).